The primary structure comprises 872 residues: DNA mismatch repair protein MutS (872 aa).

G622–S629 lines the ATP pocket.

Belongs to the DNA mismatch repair MutS family.

Functionally, this protein is involved in the repair of mismatches in DNA. It is possible that it carries out the mismatch recognition step. This protein has a weak ATPase activity. This chain is DNA mismatch repair protein MutS, found in Geotalea uraniireducens (strain Rf4) (Geobacter uraniireducens).